The following is a 278-amino-acid chain: Diaminopimelate epimerase (278 aa).

2 residues coordinate substrate: asparagine 13 and asparagine 66. The Proton donor role is filled by cysteine 75. Substrate contacts are provided by residues 76 to 77 (GN), asparagine 162, asparagine 195, and 213 to 214 (ER). The active-site Proton acceptor is the cysteine 222. 223-224 (GT) provides a ligand contact to substrate.

The protein belongs to the diaminopimelate epimerase family. Homodimer.

The protein resides in the cytoplasm. The catalysed reaction is (2S,6S)-2,6-diaminopimelate = meso-2,6-diaminopimelate. Its pathway is amino-acid biosynthesis; L-lysine biosynthesis via DAP pathway; DL-2,6-diaminopimelate from LL-2,6-diaminopimelate: step 1/1. Its function is as follows. Catalyzes the stereoinversion of LL-2,6-diaminopimelate (L,L-DAP) to meso-diaminopimelate (meso-DAP), a precursor of L-lysine and an essential component of the bacterial peptidoglycan. The polypeptide is Diaminopimelate epimerase (Trichodesmium erythraeum (strain IMS101)).